We begin with the raw amino-acid sequence, 235 residues long: Octanoyltransferase (235 aa).

One can recognise a BPL/LPL catalytic domain in the interval 44–231; that stretch reads DTTADELWLV…HQVGLPNENN (188 aa). Substrate contacts are provided by residues 83–90, 150–152, and 163–165; these read RGGQVTYH, SLG, and GLA. Cys-181 functions as the Acyl-thioester intermediate in the catalytic mechanism.

This sequence belongs to the LipB family.

The protein localises to the cytoplasm. It catalyses the reaction octanoyl-[ACP] + L-lysyl-[protein] = N(6)-octanoyl-L-lysyl-[protein] + holo-[ACP] + H(+). Its pathway is protein modification; protein lipoylation via endogenous pathway; protein N(6)-(lipoyl)lysine from octanoyl-[acyl-carrier-protein]: step 1/2. Functionally, catalyzes the transfer of endogenously produced octanoic acid from octanoyl-acyl-carrier-protein onto the lipoyl domains of lipoate-dependent enzymes. Lipoyl-ACP can also act as a substrate although octanoyl-ACP is likely to be the physiological substrate. This is Octanoyltransferase from Colwellia psychrerythraea (strain 34H / ATCC BAA-681) (Vibrio psychroerythus).